The chain runs to 262 residues: MPAELSPIDTAKFAAARRAVDLVQDGMKLGLGTGSTAAWMVRCLAERVREEGLRVQGVPTSTRTAELARALGIQVVTLDEAKWLDLTIDGADEFDADFNLIKGGGAALLQEKIVATASDRMVVIADAAKEVAHLGAFPLPVEVIPFGWQSTKMLIEETLEGMDVLGREVTLRLSGDAPLLTDEKNYILDLHLKRIGEPRQLGLALNQIAGVVENGLFIDICDTVVVGHGDGRVSLRDLQSGQAEEGCIDMDRARNIFADLGD.

Substrate contacts are provided by residues 33–36, 89–92, and 102–105; these read TGST, DGAD, and KGGG. Glu-111 (proton acceptor) is an active-site residue. Residue Lys-129 participates in substrate binding.

It belongs to the ribose 5-phosphate isomerase family. Homodimer.

The catalysed reaction is aldehydo-D-ribose 5-phosphate = D-ribulose 5-phosphate. It functions in the pathway carbohydrate degradation; pentose phosphate pathway; D-ribose 5-phosphate from D-ribulose 5-phosphate (non-oxidative stage): step 1/1. Functionally, catalyzes the reversible conversion of ribose-5-phosphate to ribulose 5-phosphate. This Cereibacter sphaeroides (strain ATCC 17029 / ATH 2.4.9) (Rhodobacter sphaeroides) protein is Ribose-5-phosphate isomerase A.